A 108-amino-acid polypeptide reads, in one-letter code: Holo-[acyl-carrier-protein] synthase (108 aa).

Asp-9 and Glu-52 together coordinate Mg(2+).

This sequence belongs to the P-Pant transferase superfamily. AcpS family. It depends on Mg(2+) as a cofactor.

It is found in the cytoplasm. The catalysed reaction is apo-[ACP] + CoA = holo-[ACP] + adenosine 3',5'-bisphosphate + H(+). Functionally, transfers the 4'-phosphopantetheine moiety from coenzyme A to a Ser of acyl-carrier-protein. The polypeptide is Holo-[acyl-carrier-protein] synthase (Coprothermobacter proteolyticus (strain ATCC 35245 / DSM 5265 / OCM 4 / BT)).